Consider the following 283-residue polypeptide: 4-hydroxybenzoate octaprenyltransferase (283 aa).

9 helical membrane passes run 16 to 36, 40 to 60, 85 to 105, 108 to 128, 135 to 155, 160 to 180, 204 to 224, 226 to 246, and 263 to 283; these read PIGT…AGAG, LRIV…GCVI, ISAT…FGLV, LNTE…LYPF, LPQI…FTAL, WFIA…YDTE, FDRL…GWIL, LITV…LFAY, and FLHN…HYWF.

Belongs to the UbiA prenyltransferase family. Requires Mg(2+) as cofactor.

The protein resides in the cell inner membrane. The enzyme catalyses all-trans-octaprenyl diphosphate + 4-hydroxybenzoate = 4-hydroxy-3-(all-trans-octaprenyl)benzoate + diphosphate. It participates in cofactor biosynthesis; ubiquinone biosynthesis. Catalyzes the prenylation of para-hydroxybenzoate (PHB) with an all-trans polyprenyl group. Mediates the second step in the final reaction sequence of ubiquinone-8 (UQ-8) biosynthesis, which is the condensation of the polyisoprenoid side chain with PHB, generating the first membrane-bound Q intermediate 3-octaprenyl-4-hydroxybenzoate. The chain is 4-hydroxybenzoate octaprenyltransferase from Idiomarina loihiensis (strain ATCC BAA-735 / DSM 15497 / L2-TR).